Reading from the N-terminus, the 99-residue chain is Cell division protein FtsB (99 aa).

Residues 1 to 3 (MRV) are Cytoplasmic-facing. Residues 4-21 (FTAILLILLVLLQYRLWF) form a helical membrane-spanning segment. Residues 22–99 (GKNSVPDYLV…KENSTRNVNN (78 aa)) are Periplasmic-facing. A coiled-coil region spans residues 29–53 (YLVLKENVVRQQSANEKLQQRNKLL).

Belongs to the FtsB family. In terms of assembly, part of a complex composed of FtsB, FtsL and FtsQ.

The protein localises to the cell inner membrane. Essential cell division protein. May link together the upstream cell division proteins, which are predominantly cytoplasmic, with the downstream cell division proteins, which are predominantly periplasmic. This is Cell division protein FtsB from Colwellia psychrerythraea (strain 34H / ATCC BAA-681) (Vibrio psychroerythus).